The sequence spans 1488 residues: Chromosome partition protein MukB (1488 aa).

34–41 is a binding site for ATP; that stretch reads GGNGAGKS. Coiled coils occupy residues 326–418, 444–472, and 509–602; these read LEAD…QYNQ, LDTF…QTAH, and RHLA…RRAP. The tract at residues 666 to 783 is flexible hinge; the sequence is PGGAEDQRLN…SLPIFGRAAR (118 aa). Coiled coils occupy residues 835–923, 977–1116, and 1209–1265; these read EAEI…AKLE, EMLS…AKAG, and VEAI…LQSV. A disordered region spans residues 1049–1074; that stretch reads ADSGAEERARQRRDELHAQLSNNRSR. Residues 1051-1065 are compositionally biased toward basic and acidic residues; that stretch reads SGAEERARQRRDELH.

This sequence belongs to the SMC family. MukB subfamily. As to quaternary structure, homodimerization via its hinge domain. Binds to DNA via its C-terminal region. Interacts, and probably forms a ternary complex, with MukE and MukF via its C-terminal region. The complex formation is stimulated by calcium or magnesium. Interacts with tubulin-related protein FtsZ.

The protein localises to the cytoplasm. The protein resides in the nucleoid. Its function is as follows. Plays a central role in chromosome condensation, segregation and cell cycle progression. Functions as a homodimer, which is essential for chromosome partition. Involved in negative DNA supercoiling in vivo, and by this means organize and compact chromosomes. May achieve or facilitate chromosome segregation by condensation DNA from both sides of a centrally located replisome during cell division. The chain is Chromosome partition protein MukB from Salmonella heidelberg (strain SL476).